The following is an 82-amino-acid chain: Toxin Tpa7 (82 aa).

Residues 1 to 20 (MKGMILLISCLMLIEVVVEC) form the signal peptide. Positions 21 to 82 (KEGYPLDTLN…KIWDLKKNKC (62 aa)) constitute an LCN-type CS-alpha/beta domain. 4 cysteine pairs are disulfide-bonded: Cys-32–Cys-82, Cys-36–Cys-58, Cys-44–Cys-63, and Cys-48–Cys-65.

It belongs to the long (4 C-C) scorpion toxin superfamily. Sodium channel inhibitor family. Beta subfamily. As to expression, expressed by the venom gland.

The protein resides in the secreted. Beta toxins bind voltage-independently at site-4 of sodium channels (Nav) and shift the voltage of activation toward more negative potentials thereby affecting sodium channel activation and promoting spontaneous and repetitive firing. This chain is Toxin Tpa7, found in Tityus pachyurus (Colombian scorpion).